The following is a 362-amino-acid chain: Cobalt-precorrin-5B C(1)-methyltransferase (362 aa).

The protein belongs to the CbiD family.

It carries out the reaction Co-precorrin-5B + S-adenosyl-L-methionine = Co-precorrin-6A + S-adenosyl-L-homocysteine. It participates in cofactor biosynthesis; adenosylcobalamin biosynthesis; cob(II)yrinate a,c-diamide from sirohydrochlorin (anaerobic route): step 6/10. In terms of biological role, catalyzes the methylation of C-1 in cobalt-precorrin-5B to form cobalt-precorrin-6A. This chain is Cobalt-precorrin-5B C(1)-methyltransferase, found in Burkholderia cenocepacia (strain HI2424).